The primary structure comprises 292 residues: ATP synthase gamma chain (292 aa).

The protein belongs to the ATPase gamma chain family. F-type ATPases have 2 components, CF(1) - the catalytic core - and CF(0) - the membrane proton channel. CF(1) has five subunits: alpha(3), beta(3), gamma(1), delta(1), epsilon(1). CF(0) has three main subunits: a, b and c.

Its subcellular location is the cell membrane. Its function is as follows. Produces ATP from ADP in the presence of a proton gradient across the membrane. The gamma chain is believed to be important in regulating ATPase activity and the flow of protons through the CF(0) complex. The sequence is that of ATP synthase gamma chain from Streptococcus pneumoniae serotype 2 (strain D39 / NCTC 7466).